The following is a 338-amino-acid chain: Fructose-1,6-bisphosphatase class 1 (338 aa).

Mg(2+) is bound by residues Glu91, Asp113, Leu115, and Asp116. Residues 116-119 (DGSS), Asn208, and Lys274 contribute to the substrate site. Glu280 contributes to the Mg(2+) binding site.

Belongs to the FBPase class 1 family. As to quaternary structure, homotetramer. Mg(2+) is required as a cofactor.

The protein resides in the cytoplasm. It catalyses the reaction beta-D-fructose 1,6-bisphosphate + H2O = beta-D-fructose 6-phosphate + phosphate. The protein operates within carbohydrate biosynthesis; gluconeogenesis. The sequence is that of Fructose-1,6-bisphosphatase class 1 from Ralstonia pickettii (strain 12J).